Consider the following 24-residue polypeptide: Small ribosomal subunit protein uS5 (24 aa).

This sequence belongs to the universal ribosomal protein uS5 family. As to quaternary structure, part of the 30S ribosomal subunit. Contacts proteins S4 and S8.

With S4 and S12 plays an important role in translational accuracy. Functionally, located at the back of the 30S subunit body where it stabilizes the conformation of the head with respect to the body. In Vibrio proteolyticus (Aeromonas proteolytica), this protein is Small ribosomal subunit protein uS5 (rpsE).